We begin with the raw amino-acid sequence, 86 residues long: Small ribosomal subunit protein uS15c (86 aa).

It belongs to the universal ribosomal protein uS15 family. Part of the 30S ribosomal subunit.

The protein resides in the plastid. It localises to the chloroplast. This Cryptomeria japonica (Japanese cedar) protein is Small ribosomal subunit protein uS15c (rps15).